We begin with the raw amino-acid sequence, 874 residues long: Alanine--tRNA ligase (874 aa).

Zn(2+) contacts are provided by histidine 564, histidine 568, cysteine 665, and histidine 669.

It belongs to the class-II aminoacyl-tRNA synthetase family. Requires Zn(2+) as cofactor.

It localises to the cytoplasm. The enzyme catalyses tRNA(Ala) + L-alanine + ATP = L-alanyl-tRNA(Ala) + AMP + diphosphate. In terms of biological role, catalyzes the attachment of alanine to tRNA(Ala) in a two-step reaction: alanine is first activated by ATP to form Ala-AMP and then transferred to the acceptor end of tRNA(Ala). Also edits incorrectly charged Ser-tRNA(Ala) and Gly-tRNA(Ala) via its editing domain. This is Alanine--tRNA ligase from Paraburkholderia phytofirmans (strain DSM 17436 / LMG 22146 / PsJN) (Burkholderia phytofirmans).